A 490-amino-acid polypeptide reads, in one-letter code: C-type lectin domain family 14 member A (490 aa).

The first 21 residues, 1 to 21, serve as a signal peptide directing secretion; the sequence is MRPAFALCLLWQALWPGPGGG. Over 22 to 397 the chain is Extracellular; sequence EHPTADRAGC…TPQAFDSSSA (376 aa). In terms of domain architecture, C-type lectin spans 33–173; that stretch reads ASGACYSLHH…LRANGYLCKY (141 aa). Cys-143 and Cys-162 are disulfide-bonded. A glycan (N-linked (GlcNAc...) asparagine) is linked at Asn-189. The region spanning 245–287 is the EGF-like domain; the sequence is PCPGRYLRAGKCAELPNCLDDLGGFACECATGFELGKDGRSCV. The tract at residues 286 to 349 is disordered; sequence CVTSGEGQPT…VTSIPEIPRW (64 aa). Residues 301–315 show a composition bias toward low complexity; that stretch reads VPTRRPPATATSPVP. Residue Asn-381 is glycosylated (N-linked (GlcNAc...) asparagine). The chain crosses the membrane as a helical span at residues 398-418; sequence VVFIFVSTAVVVLVILTMTVL. Over 419 to 490 the chain is Cytoplasmic; that stretch reads GLVKLCFHES…AESPLGSSDA (72 aa). The interval 428-461 is disordered; that stretch reads SPSSQPRKESMGPPGLESDPEPAALGSSSAHCTN.

Its subcellular location is the membrane. The chain is C-type lectin domain family 14 member A (CLEC14A) from Homo sapiens (Human).